A 130-amino-acid chain; its full sequence is Small ribosomal subunit protein uS9 (130 aa).

It belongs to the universal ribosomal protein uS9 family.

In Xanthomonas oryzae pv. oryzae (strain MAFF 311018), this protein is Small ribosomal subunit protein uS9.